The chain runs to 115 residues: Integration host factor subunit alpha (115 aa).

The protein belongs to the bacterial histone-like protein family. Heterodimer of an alpha and a beta chain.

Its function is as follows. This protein is one of the two subunits of integration host factor, a specific DNA-binding protein that functions in genetic recombination as well as in transcriptional and translational control. The protein is Integration host factor subunit alpha of Burkholderia pseudomallei (strain K96243).